We begin with the raw amino-acid sequence, 1848 residues long: Histone-lysine N-methyltransferase, H3 lysine-79 specific (1848 aa).

One can recognise a DOT1 domain in the interval 19–336 (DVISFAWPLQ…ILERYFQRLK (318 aa)). S-adenosyl-L-methionine-binding positions include 142–145 (YGET), 165–174 (FIDLGSGVGQ), Glu192, and 228–229 (DF). Disordered stretches follow at residues 338-537 (KGGN…TRKA), 558-593 (AVSVPSKESSSKEDPPRAASAGPGRKGRMKKGARGR), 886-908 (LNSVKNSRRNREHRARSQEWPEV), 960-996 (PPPATAPVSIKSSPGHHYKDTTLMPAPKQQQQQQMTL), 1033-1075 (LNED…AQSL), 1165-1190 (HMASLYPAGQQTTPADLGYQRRRSSV), 1221-1333 (QRQQ…TQVS), 1345-1374 (QEKLSQHVTPQATPPLPGHGGAPTSGKTIG), 1432-1463 (VHVRPLSEESQDPQPTSYAQERGPGLGAGGAA), 1486-1508 (ARANAGTAPPATHSSSARSGRDY), 1529-1559 (EQQQKQSKGAGSAGSSSLRGPRLNGANPPLE), 1573-1604 (KYKEETEERQRRAAAAASSSAGPPAGMELPTH), 1637-1713 (SPLA…VDPP), and 1731-1757 (QLSHHQQQQQQMLHHHQSQQQQHLQLT). Positions 339–360 (GGNDHESVGTVRTTRDRAKREA) are enriched in basic and acidic residues. Over residues 364-373 (QHHHNNHHSN) the composition is skewed to basic residues. Low complexity predominate over residues 391–405 (ATATAAHQQRHQSQS). Residues 419–428 (SGQQAASKTR) are compositionally biased toward polar residues. Low complexity-rich tracts occupy residues 429–439 (QQLQHQHNQQQ) and 453–474 (DATNGNGGNTTTATNTTSASNG). 3 positions are modified to phosphoserine: Ser491, Ser492, and Ser494. Positions 507–518 (GSNGGSIGGGSV) are enriched in gly residues. Composition is skewed to basic residues over residues 526-535 (TQKKRKKLTR) and 582-593 (RKGRMKKGARGR). Over residues 1221–1235 (QRQQMRVEEQQQQQQ) the composition is skewed to low complexity. Residues 1236-1263 (HQHHHHHHHHHPQHRLPQHVQHQHPHQH) show a composition bias toward basic residues. The segment covering 1289-1300 (EPPQTQPLELLP) has biased composition (low complexity). Phosphoserine is present on residues Ser1318, Ser1324, and Ser1325. The segment covering 1532-1545 (QKQSKGAGSAGSSS) has biased composition (low complexity). A compositionally biased stretch (basic and acidic residues) spans 1574-1583 (YKEETEERQR). Composition is skewed to low complexity over residues 1585–1598 (AAAAASSSAGPPAG) and 1681–1696 (HDATTPSPTPSSSSSS). Positions 1697-1706 (CGRRSNSNNG) are enriched in polar residues.

It belongs to the class I-like SAM-binding methyltransferase superfamily. DOT1 family. Broadly expressed in most tissues. Expressed in a large subset of neurons and in a small subset of glial cells.

Its subcellular location is the nucleus. It carries out the reaction L-lysyl(79)-[histone H3] + 3 S-adenosyl-L-methionine = N(6),N(6),N(6)-trimethyl-L-lysyl(79)-[histone H3] + 3 S-adenosyl-L-homocysteine + 3 H(+). Its function is as follows. Histone methyltransferase. Methylates 'Lys-79' of histone H3. Required for Polycomb Group (PcG) and trithorax Group (trxG) maintenance of expression. Also involved in telomeric silencing but do not in centric heterochromatin. Probably participates in pairing sensitivity. In Drosophila melanogaster (Fruit fly), this protein is Histone-lysine N-methyltransferase, H3 lysine-79 specific (gpp).